An 87-amino-acid chain; its full sequence is Cell division topological specificity factor (87 aa).

Belongs to the MinE family.

Prevents the cell division inhibition by proteins MinC and MinD at internal division sites while permitting inhibition at polar sites. This ensures cell division at the proper site by restricting the formation of a division septum at the midpoint of the long axis of the cell. The protein is Cell division topological specificity factor of Neisseria meningitidis serogroup C (strain 053442).